The chain runs to 1339 residues: Retrotransposon Gag-like protein 9 (1339 aa).

Polar residues-rich tracts occupy residues 533-545, 679-693, and 700-711; these read TVPT…TQKT, SGTK…TTSG, and TRLSGPGATSTP. Disordered stretches follow at residues 533 to 555, 679 to 711, 845 to 864, 880 to 901, 982 to 1010, and 1078 to 1116; these read TVPT…PMST, SGTK…TSTP, GVMS…SRPQ, PATA…LSTL, ATSL…GAGS, and ATDS…PPKE. The span at 891 to 901 shows a compositional bias: low complexity; sequence RSPASSTLSTL. A compositionally biased stretch (polar residues) spans 1078-1106; it reads ATDSGEASTSHTRFTAPGSKSTPHMTSTA.

The sequence is that of Retrotransposon Gag-like protein 9 from Mus musculus (Mouse).